Reading from the N-terminus, the 278-residue chain is HTH-type transcriptional activator RhaS (278 aa).

Residues 174–272 (NLLLAWLEDH…NWSPRDIRQG (99 aa)) form the HTH araC/xylS-type domain. 2 DNA-binding regions (H-T-H motif) span residues 191–212 (DAVADQFSLSLRTLHRQLKQQT) and 239–262 (VTDIAYRCGFSDSNHFSTLFRREF).

In terms of assembly, binds DNA as a dimer.

The protein resides in the cytoplasm. In terms of biological role, activates expression of the rhaBAD and rhaT operons. The protein is HTH-type transcriptional activator RhaS of Shigella dysenteriae serotype 1 (strain Sd197).